The sequence spans 492 residues: ATP synthase subunit beta, chloroplastic (492 aa).

Position 170-177 (G170–T177) interacts with ATP.

It belongs to the ATPase alpha/beta chains family. As to quaternary structure, F-type ATPases have 2 components, CF(1) - the catalytic core - and CF(0) - the membrane proton channel. CF(1) has five subunits: alpha(3), beta(3), gamma(1), delta(1), epsilon(1). CF(0) has four main subunits: a(1), b(1), b'(1) and c(9-12).

It is found in the plastid. Its subcellular location is the chloroplast thylakoid membrane. It catalyses the reaction ATP + H2O + 4 H(+)(in) = ADP + phosphate + 5 H(+)(out). Produces ATP from ADP in the presence of a proton gradient across the membrane. The catalytic sites are hosted primarily by the beta subunits. This is ATP synthase subunit beta, chloroplastic from Marchantia polymorpha (Common liverwort).